Here is a 243-residue protein sequence, read N- to C-terminus: Protein Thf1 (243 aa).

Residues S180 to L224 are a coiled coil. Residues E210–E220 are compositionally biased toward basic and acidic residues. The tract at residues E210–S243 is disordered. Over residues S221–S243 the composition is skewed to polar residues.

The protein belongs to the THF1 family.

Functionally, may be involved in photosynthetic membrane biogenesis. The chain is Protein Thf1 from Prochlorococcus marinus (strain MIT 9313).